The chain runs to 182 residues: Ribosome maturation factor RimM (182 aa).

Residues 102 to 182 form the PRC barrel domain; sequence EEGDYYWKDL…TIEVDWDPGF (81 aa).

The protein belongs to the RimM family. Binds ribosomal protein uS19.

Its subcellular location is the cytoplasm. An accessory protein needed during the final step in the assembly of 30S ribosomal subunit, possibly for assembly of the head region. Essential for efficient processing of 16S rRNA. May be needed both before and after RbfA during the maturation of 16S rRNA. It has affinity for free ribosomal 30S subunits but not for 70S ribosomes. The chain is Ribosome maturation factor RimM from Salmonella gallinarum (strain 287/91 / NCTC 13346).